Reading from the N-terminus, the 159-residue chain is Protein SPA, chloroplastic (159 aa).

A chloroplast-targeting transit peptide spans 1 to 47 (MLTAPSLSRFKSPFISSPLKLPTLSSSFFTQKFHQTCRRRNSYPCIK). The helical transmembrane segment at 56–76 (VIAITVGVLSVAIGVGIPVFY) threads the bilayer. The interval 85-145 (KRENTQPCFP…TCTTCQGSGI (61 aa)) is CR-type-like. 4 CXXCXGXG motif repeats span residues 92–99 (CFPCTGTG), 103–110 (CRFCMGTG), 126–133 (CINCDGAG), and 137–144 (CTTCQGSG).

In terms of tissue distribution, expressed in source leaves. Lower levels of expression in fruits and stems.

The protein localises to the plastid. Its subcellular location is the chloroplast thylakoid membrane. Participates in determining harvest index (HI) by affecting source-sink carbon distribution. Up-regulates the conversion of fixed carbon to exportable sugars. The sequence is that of Protein SPA, chloroplastic from Solanum lycopersicum (Tomato).